Consider the following 465-residue polypeptide: Iron-sulfur cluster assembly SufBD family protein SAR0880 (465 aa).

The protein belongs to the iron-sulfur cluster assembly SufBD family.

This Staphylococcus aureus (strain MRSA252) protein is Iron-sulfur cluster assembly SufBD family protein SAR0880.